A 337-amino-acid polypeptide reads, in one-letter code: Large ribosomal subunit protein uL3 (337 aa).

The segment at 1-26 (MGHAHAPRRGSLGYSPRVRARSQKPK) is disordered.

The protein belongs to the universal ribosomal protein uL3 family. As to quaternary structure, part of the 50S ribosomal subunit. Forms a cluster with proteins L14 and L24e.

Its function is as follows. One of the primary rRNA binding proteins, it binds directly near the 3'-end of the 23S rRNA, where it nucleates assembly of the 50S subunit. This chain is Large ribosomal subunit protein uL3, found in Methanocella arvoryzae (strain DSM 22066 / NBRC 105507 / MRE50).